The following is a 460-amino-acid chain: A-type ATP synthase subunit B (460 aa).

The protein belongs to the ATPase alpha/beta chains family. As to quaternary structure, has multiple subunits with at least A(3), B(3), C, D, E, F, H, I and proteolipid K(x).

The protein resides in the cell membrane. Component of the A-type ATP synthase that produces ATP from ADP in the presence of a proton gradient across the membrane. The B chain is a regulatory subunit. The polypeptide is A-type ATP synthase subunit B (Methanosarcina barkeri (strain Fusaro / DSM 804)).